Reading from the N-terminus, the 165-residue chain is Xanthine-guanine phosphoribosyltransferase (165 aa).

Residues 41–42 and 98–106 each bind 5-phospho-alpha-D-ribose 1-diphosphate; these read RG and DDLTDTGKT. Residue aspartate 99 coordinates Mg(2+). Positions 102 and 145 each coordinate guanine. Xanthine-binding residues include aspartate 102 and isoleucine 145. Residues 102-106 and 144-145 contribute to the GMP site; these read DTGKT and WI.

The protein belongs to the purine/pyrimidine phosphoribosyltransferase family. XGPT subfamily. As to quaternary structure, homotetramer. Mg(2+) serves as cofactor.

It is found in the cell inner membrane. The catalysed reaction is GMP + diphosphate = guanine + 5-phospho-alpha-D-ribose 1-diphosphate. The enzyme catalyses XMP + diphosphate = xanthine + 5-phospho-alpha-D-ribose 1-diphosphate. It catalyses the reaction IMP + diphosphate = hypoxanthine + 5-phospho-alpha-D-ribose 1-diphosphate. Its pathway is purine metabolism; GMP biosynthesis via salvage pathway; GMP from guanine: step 1/1. The protein operates within purine metabolism; XMP biosynthesis via salvage pathway; XMP from xanthine: step 1/1. Functionally, purine salvage pathway enzyme that catalyzes the transfer of the ribosyl-5-phosphate group from 5-phospho-alpha-D-ribose 1-diphosphate (PRPP) to the N9 position of the 6-oxopurines guanine and xanthine to form the corresponding ribonucleotides GMP (guanosine 5'-monophosphate) and XMP (xanthosine 5'-monophosphate), with the release of PPi. To a lesser extent, also acts on hypoxanthine. The chain is Xanthine-guanine phosphoribosyltransferase from Brucella canis (strain ATCC 23365 / NCTC 10854 / RM-666).